The chain runs to 239 residues: Venom nerve growth factor (239 aa).

The N-terminal stretch at 1-18 (MSMLCYTLIIAFLIGIWA) is a signal peptide. Positions 19–125 (APKSEDNVPL…ALNRNIQAKR (107 aa)) are excised as a propeptide. Basic and acidic residues predominate over residues 47–66 (GLKTSRNTDQRHPAPKKADD). The interval 47-68 (GLKTSRNTDQRHPAPKKADDQE) is disordered. 3 disulfides stabilise this stretch: cysteine 139-cysteine 203, cysteine 181-cysteine 231, and cysteine 191-cysteine 233.

The protein belongs to the NGF-beta family. As to quaternary structure, homodimer; non-covalently linked. Expressed by the venom gland.

The protein localises to the secreted. In terms of biological role, nerve growth factor is important for the development and maintenance of the sympathetic and sensory nervous systems. It stimulates division and differentiation of sympathetic and embryonic sensory neurons as well as basal forebrain cholinergic neurons in the brain. Its relevance in the snake venom is not clear. However, it has been shown to inhibit metalloproteinase-dependent proteolysis of platelet glycoprotein Ib alpha, suggesting a metalloproteinase inhibition to prevent metalloprotease autodigestion and/or protection against prey proteases. Binds a lipid between the two protein chains in the homodimer. The lipid-bound form promotes histamine relase from mouse mast cells, contrary to the lipid-free form. The sequence is that of Venom nerve growth factor from Pseudechis porphyriacus (Red-bellied black snake).